The primary structure comprises 762 residues: Xaa-Pro dipeptidyl-peptidase (762 aa).

Catalysis depends on charge relay system residues S349, D469, and H499.

This sequence belongs to the peptidase S15 family. In terms of assembly, homodimer.

The protein resides in the cytoplasm. The catalysed reaction is Hydrolyzes Xaa-Pro-|- bonds to release unblocked, N-terminal dipeptides from substrates including Ala-Pro-|-p-nitroanilide and (sequentially) Tyr-Pro-|-Phe-Pro-|-Gly-Pro-|-Ile.. Removes N-terminal dipeptides sequentially from polypeptides having unsubstituted N-termini provided that the penultimate residue is proline. This Streptococcus sanguinis (strain SK36) protein is Xaa-Pro dipeptidyl-peptidase.